The primary structure comprises 276 residues: Phospholipid phosphatase 2 (276 aa).

Over 1 to 4 the chain is Cytoplasmic; that stretch reads MERR. The chain crosses the membrane as a helical span at residues 5 to 25; sequence WVFVLLDVLCVLVASLPFIIL. Over 26-51 the chain is Lumenal; the sequence is TLVNAPYKRGFYCGDDSIRYPYRPDT. Residues 52 to 72 traverse the membrane as a helical segment; sequence ITHGLMAGVIITATVILVSLG. Topologically, residues 73 to 87 are cytoplasmic; the sequence is EAYLVYTDRLYSRSN. The chain crosses the membrane as a helical span at residues 88–108; it reads FNNYVAAIYKVLGTFLFGAAV. The Lumenal portion of the chain corresponds to 109–161; the sequence is SQSLTDLAKYMIGRLRPSFLAVCDPDWSQVNCSGYVQLEVCRGSPANVTEARL. Residues 117–125 form a phosphatase sequence motif I region; sequence KYMIGRLRP. 2 N-linked (GlcNAc...) asparagine glycosylation sites follow: Asn139 and Asn155. A helical membrane pass occupies residues 162-182; the sequence is SFYSGHSSFGMYCMLFLALYV. The tract at residues 164–167 is phosphatase sequence motif II; the sequence is YSGH. His167 (proton donors) is an active-site residue. The Cytoplasmic portion of the chain corresponds to 183–189; sequence QARLCWK. Residues 190 to 210 form a helical membrane-spanning segment; it reads WARLLRPTVQFFLVAFAIYVG. The Lumenal segment spans residues 211 to 218; it reads YTRVSDHK. The interval 212–223 is phosphatase sequence motif III; the sequence is TRVSDHKHHWSD. His219 serves as the catalytic Nucleophile. A helical transmembrane segment spans residues 219 to 239; it reads HHWSDVLVGLLQGALVACLTV. At 240–276 the chain is on the cytoplasmic side; sequence RYVSDFFKSRPPQPCQEDEVPERKPSLSLTLTLGDRP. Residues 251–276 are disordered; the sequence is PQPCQEDEVPERKPSLSLTLTLGDRP.

Belongs to the PA-phosphatase related phosphoesterase family. As to quaternary structure, forms functional homodimers and homooligomers. Can also form heterooligomers with PLPP1 and PLPP3. Post-translationally, N-glycosylated. Expressed at high levels in lung, liver and kidney; at low levels in heart and brain, and was not detected in skeletal muscle.

It localises to the membrane. The protein resides in the cell membrane. Its subcellular location is the early endosome membrane. The protein localises to the endoplasmic reticulum membrane. It catalyses the reaction a 1,2-diacyl-sn-glycero-3-phosphate + H2O = a 1,2-diacyl-sn-glycerol + phosphate. It carries out the reaction 1,2-dihexadecanoyl-sn-glycero-3-phosphate + H2O = 1,2-dihexadecanoyl-sn-glycerol + phosphate. The enzyme catalyses 1,2-di-(9Z-octadecenoyl)-sn-glycero-3-phosphate + H2O = 1,2-di-(9Z-octadecenoyl)-sn-glycerol + phosphate. The catalysed reaction is a monoacyl-sn-glycero-3-phosphate + H2O = a monoacylglycerol + phosphate. It catalyses the reaction (9Z)-octadecenoyl-sn-glycero-3-phosphate + H2O = (9Z-octadecenoyl)-glycerol + phosphate. It carries out the reaction sphing-4-enine 1-phosphate + H2O = sphing-4-enine + phosphate. The enzyme catalyses an N-acylsphing-4-enine 1-phosphate + H2O = an N-acylsphing-4-enine + phosphate. The catalysed reaction is N-(octanoyl)-sphing-4-enine-1-phosphate + H2O = N-octanoylsphing-4-enine + phosphate. It catalyses the reaction N-(9Z-octadecenoyl)-ethanolamine phosphate + H2O = N-(9Z-octadecenoyl) ethanolamine + phosphate. The protein operates within lipid metabolism; phospholipid metabolism. With respect to regulation, magnesium-independent phospholipid phosphatase. Insensitive to N-ethylmaleimide. In terms of biological role, magnesium-independent phospholipid phosphatase that catalyzes the dephosphorylation of a variety of glycerolipid and sphingolipid phosphate esters including phosphatidate/PA, lysophosphatidate/LPA, sphingosine 1-phosphate/S1P and ceramide 1-phosphate/C1P. Has no apparent extracellular phosphatase activity and therefore most probably acts intracellularly. Also acts on N-oleoyl ethanolamine phosphate/N-(9Z-octadecenoyl)-ethanolamine phosphate, a potential physiological compound. Through dephosphorylation of these bioactive lipid mediators produces new bioactive compounds and may regulate signal transduction in different cellular processes. Indirectly regulates, for instance, cell cycle G1/S phase transition through its phospholipid phosphatase activity. The chain is Phospholipid phosphatase 2 from Mus musculus (Mouse).